The sequence spans 293 residues: N-acetylneuraminate lyase (293 aa).

Aceneuramate-binding residues include S48 and S49. Y137 serves as the catalytic Proton donor. K165 acts as the Schiff-base intermediate with substrate in catalysis. Aceneuramate contacts are provided by T167, G189, D191, E192, and S208.

It belongs to the DapA family. NanA subfamily. As to quaternary structure, homotetramer.

The protein resides in the cytoplasm. The catalysed reaction is aceneuramate = aldehydo-N-acetyl-D-mannosamine + pyruvate. It functions in the pathway amino-sugar metabolism; N-acetylneuraminate degradation; D-fructose 6-phosphate from N-acetylneuraminate: step 1/5. Its function is as follows. Catalyzes the reversible aldol cleavage of N-acetylneuraminic acid (sialic acid; Neu5Ac) to form pyruvate and N-acetylmannosamine (ManNAc) via a Schiff base intermediate. In Staphylococcus aureus (strain bovine RF122 / ET3-1), this protein is N-acetylneuraminate lyase.